Reading from the N-terminus, the 165-residue chain is Choriogonadotropin subunit beta 7 (165 aa).

Positions 1 to 20 are cleaved as a signal peptide; the sequence is MEMFQGLLLLLLLSMGGTWA. 6 disulfides stabilise this stretch: Cys-29/Cys-77, Cys-43/Cys-92, Cys-46/Cys-130, Cys-54/Cys-108, Cys-58/Cys-110, and Cys-113/Cys-120. Asn-33 and Asn-50 each carry an N-linked (GlcNAc...) asparagine glycan. The segment at 131–165 is disordered; sequence DDPRFQASSSSKAPPPSLPSPSRLPGPSDTPILPQ. O-linked (GalNAc...) serine glycosylation is found at Ser-141, Ser-147, Ser-152, and Ser-158. Residues 143 to 154 show a composition bias toward pro residues; that stretch reads APPPSLPSPSRL.

This sequence belongs to the glycoprotein hormones subunit beta family. Heterodimer of a common alpha chain identical in LH, FSH, TSH and HCG and a unique beta chain distinct in each of the hormones and confers receptor and biological specificity. In terms of tissue distribution, high expression in the placenta throughout pregnancy.

It is found in the secreted. Beta subunit of the human chorionic gonadotropin (hCG). hCG is a complex glycoprotein composed of two glycosylated subunits alpha and beta which are non-covalently associated. The alpha subunit is identical to those in the pituitary gonadotropin hormones (LH, FSH and TSH). The beta subunits are distinct in each of the hormones and confer receptor and biological specificity. Has an essential role for pregnancy and maternal adaptation. Stimulates the ovaries to synthesize the steroids that are essential for the maintenance of pregnancy. The protein is Choriogonadotropin subunit beta 7 of Homo sapiens (Human).